The primary structure comprises 80 residues: Metallothionein-like protein type 2, MT2-28 (80 aa).

Belongs to the metallothionein superfamily. Type 15 family.

Functionally, metallothioneins have a high content of cysteine residues that bind various heavy metals. The polypeptide is Metallothionein-like protein type 2, MT2-28 (Brassica juncea (Indian mustard)).